Here is a 440-residue protein sequence, read N- to C-terminus: Probable aldose 1-epimerase ARB_05372 (440 aa).

The N-terminal stretch at 1–24 (MCGVLRQLMLLLLAFLSITPSCSA) is a signal peptide. N-linked (GlcNAc...) asparagine glycans are attached at residues Asn32, Asn38, Asn43, Asn68, and Asn112. Substrate is bound at residue 125–126 (NR). Residues Asn129, Asn147, Asn163, Asn171, and Asn199 are each glycosylated (N-linked (GlcNAc...) asparagine). His233 acts as the Proton donor in catalysis. N-linked (GlcNAc...) asparagine glycosylation is found at Asn243, Asn275, Asn281, and Asn306. Asp311 contributes to the substrate binding site. N-linked (GlcNAc...) asparagine glycans are attached at residues Asn321, Asn337, Asn365, and Asn385. Catalysis depends on Glu401, which acts as the Proton acceptor.

Belongs to the aldose epimerase family. As to quaternary structure, monomer.

The protein resides in the secreted. It carries out the reaction alpha-D-glucose = beta-D-glucose. It functions in the pathway carbohydrate metabolism; hexose metabolism. Mutarotase converts alpha-aldose to the beta-anomer. It is active on D-glucose, L-arabinose, D-xylose, D-galactose, maltose and lactose. The protein is Probable aldose 1-epimerase ARB_05372 of Arthroderma benhamiae (strain ATCC MYA-4681 / CBS 112371) (Trichophyton mentagrophytes).